The chain runs to 155 residues: SsrA-binding protein (155 aa).

This sequence belongs to the SmpB family.

Its subcellular location is the cytoplasm. Required for rescue of stalled ribosomes mediated by trans-translation. Binds to transfer-messenger RNA (tmRNA), required for stable association of tmRNA with ribosomes. tmRNA and SmpB together mimic tRNA shape, replacing the anticodon stem-loop with SmpB. tmRNA is encoded by the ssrA gene; the 2 termini fold to resemble tRNA(Ala) and it encodes a 'tag peptide', a short internal open reading frame. During trans-translation Ala-aminoacylated tmRNA acts like a tRNA, entering the A-site of stalled ribosomes, displacing the stalled mRNA. The ribosome then switches to translate the ORF on the tmRNA; the nascent peptide is terminated with the 'tag peptide' encoded by the tmRNA and targeted for degradation. The ribosome is freed to recommence translation, which seems to be the essential function of trans-translation. This Streptococcus pneumoniae (strain 70585) protein is SsrA-binding protein.